Here is a 114-residue protein sequence, read N- to C-terminus: Large ribosomal subunit protein bL21 (114 aa).

Belongs to the bacterial ribosomal protein bL21 family. In terms of assembly, part of the 50S ribosomal subunit. Contacts protein L20.

Functionally, this protein binds to 23S rRNA in the presence of protein L20. The sequence is that of Large ribosomal subunit protein bL21 from Protochlamydia amoebophila (strain UWE25).